A 185-amino-acid polypeptide reads, in one-letter code: ATP-dependent protease subunit HslV (185 aa).

Residue Thr2 is part of the active site. Residues Gly157, Cys160, and Thr163 each contribute to the Na(+) site.

Belongs to the peptidase T1B family. HslV subfamily. In terms of assembly, a double ring-shaped homohexamer of HslV is capped on each side by a ring-shaped HslU homohexamer. The assembly of the HslU/HslV complex is dependent on binding of ATP.

It localises to the cytoplasm. The enzyme catalyses ATP-dependent cleavage of peptide bonds with broad specificity.. With respect to regulation, allosterically activated by HslU binding. Protease subunit of a proteasome-like degradation complex believed to be a general protein degrading machinery. This chain is ATP-dependent protease subunit HslV, found in Idiomarina loihiensis (strain ATCC BAA-735 / DSM 15497 / L2-TR).